Consider the following 387-residue polypeptide: Phosphoglycerate kinase (387 aa).

Substrate-binding positions include 21–23, Arg36, 59–62, Arg113, and Arg146; these read DLN and HLGR. Residues Lys197, Glu314, and 340 to 343 each bind ATP; that span reads GGDT.

Belongs to the phosphoglycerate kinase family. As to quaternary structure, monomer.

The protein resides in the cytoplasm. The enzyme catalyses (2R)-3-phosphoglycerate + ATP = (2R)-3-phospho-glyceroyl phosphate + ADP. It participates in carbohydrate degradation; glycolysis; pyruvate from D-glyceraldehyde 3-phosphate: step 2/5. This Aliivibrio fischeri (strain MJ11) (Vibrio fischeri) protein is Phosphoglycerate kinase.